Here is a 380-residue protein sequence, read N- to C-terminus: NF-kappa-B inhibitor-like protein 1 (380 aa).

Residues 1 to 34 (MSNPSPQVPEGEASTSVCRPKSSMASTSRRQRRE) are disordered. A compositionally biased stretch (polar residues) spans 13-28 (ASTSVCRPKSSMASTS). ANK repeat units follow at residues 64-93 (GQPP…DPAH) and 97-133 (HGDT…IKNK). 2 disordered regions span residues 131–167 (KNKD…EWRQ) and 185–293 (EDDA…RGSL). Ser150 is modified (phosphoserine). The span at 150-159 (SAEEEEEDEA) shows a compositional bias: acidic residues. Composition is skewed to basic and acidic residues over residues 204–221 (RMAR…ETEG) and 236–272 (RQQE…RDPV).

Interacts with CACTIN (via N-terminal domain); the interaction occurs in a pro-inflammatory-independent manner.

Its subcellular location is the nucleus. Functionally, involved in the regulation of innate immune response. Acts as negative regulator of Toll-like receptor and interferon-regulatory factor (IRF) signaling pathways. Contributes to the negative regulation of transcriptional activation of NF-kappa-B target genes in response to endogenous pro-inflammatory stimuli. This chain is NF-kappa-B inhibitor-like protein 1 (NFKBIL1), found in Sus scrofa (Pig).